Here is a 287-residue protein sequence, read N- to C-terminus: 2-dehydro-3-deoxyphosphooctonate aldolase (287 aa).

It belongs to the KdsA family.

It localises to the cytoplasm. The catalysed reaction is D-arabinose 5-phosphate + phosphoenolpyruvate + H2O = 3-deoxy-alpha-D-manno-2-octulosonate-8-phosphate + phosphate. Its pathway is carbohydrate biosynthesis; 3-deoxy-D-manno-octulosonate biosynthesis; 3-deoxy-D-manno-octulosonate from D-ribulose 5-phosphate: step 2/3. The protein operates within bacterial outer membrane biogenesis; lipopolysaccharide biosynthesis. The chain is 2-dehydro-3-deoxyphosphooctonate aldolase from Magnetococcus marinus (strain ATCC BAA-1437 / JCM 17883 / MC-1).